The primary structure comprises 519 residues: Pleckstrin homology domain-containing family A member 8 (519 aa).

Residues 1 to 93 form the PH domain; sequence MEGVLYKWTN…WLVALGSAKA (93 aa). T139 carries the phosphothreonine modification. Phosphoserine is present on S145. A Phosphothreonine modification is found at T153. Residues 275 to 302 are disordered; that stretch reads GEENLESHDKDPAQPGSDSVCSPESPWE. The tract at residues 330–473 is glycolipid transfer protein homology domain; sequence IPTEAFLASC…EDFVAALTIK (144 aa).

In terms of assembly, homodimer. Interacts with ARF1; the interaction together with phosphatidylinositol 4-phosphate binding is required for FAPP2 GlcCer transfer ability.

Its subcellular location is the golgi apparatus. It is found in the trans-Golgi network membrane. It localises to the membrane. Functionally, cargo transport protein that is required for apical transport from the trans-Golgi network (TGN). Transports AQP2 from the trans-Golgi network (TGN) to sites of AQP2 phosphorylation. Mediates the non-vesicular transport of glucosylceramide (GlcCer) from the trans-Golgi network (TGN) to the plasma membrane and plays a pivotal role in the synthesis of complex glycosphingolipids. Binding of both phosphatidylinositol 4-phosphate (PIP) and ARF1 are essential for the GlcCer transfer ability. Also required for primary cilium formation, possibly by being involved in the transport of raft lipids to the apical membrane, and for membrane tubulation. In Mus musculus (Mouse), this protein is Pleckstrin homology domain-containing family A member 8 (Plekha8).